The chain runs to 193 residues: MTDYLLLLVGTVLVNNFVLVKFLGLCPFMGVSKKLETAMGMGLATTFVLTLASVCAWAVNQFILVPLGLAYLRTLTFILVIAVVVQFTELAVRKTSPMLYRLLGIFLPLITTNCAVLGVALLNVNQSHNFLQSAVYGFSAAVGFSLVMVLFAAIRERLALADVPAPFRGASIALITAGLMSLAFMGFSGLVKF.

The next 6 helical transmembrane spans lie at 5–25 (LLLLVGTVLVNNFVLVKFLGL), 39–59 (MGMGLATTFVLTLASVCAWAV), 62–82 (FILVPLGLAYLRTLTFILVIA), 102–122 (LLGIFLPLITTNCAVLGVALL), 134–154 (AVYGFSAAVGFSLVMVLFAAI), and 171–191 (SIALITAGLMSLAFMGFSGLV).

The protein belongs to the NqrDE/RnfAE family. As to quaternary structure, the complex is composed of six subunits: RnfA, RnfB, RnfC, RnfD, RnfE and RnfG.

It is found in the cell inner membrane. Its function is as follows. Part of a membrane-bound complex that couples electron transfer with translocation of ions across the membrane. The chain is Ion-translocating oxidoreductase complex subunit A from Edwardsiella ictaluri (strain 93-146).